A 526-amino-acid polypeptide reads, in one-letter code: Calcium-dependent protein kinase 28 (526 aa).

Residues 1 to 37 (MQPDPQPHGRGREKAAGAGPRLPPPVTAPSVGRPASV) are disordered. Residues 49-307 (YRIGKKLGQG…AHEVLCHPWI (259 aa)) enclose the Protein kinase domain. Residues 55-63 (LGQGQFGTT) and K78 contribute to the ATP site. D173 serves as the catalytic Proton acceptor. The segment at 313–343 (APDKPIDSAVLSRLKHFSAMNKLKKMALRVI) is autoinhibitory domain. EF-hand domains are found at residues 350 to 385 (EEIG…VGSD), 386 to 421 (LMEP…MNKL), 422 to 457 (EREE…FGLS), and 460 to 491 (HLED…GNAG). The Ca(2+) site is built by D363, D365, S367, T369, E374, D399, D401, S403, T405, E410, D435, D437, S439, E446, D469, N471, D473, Q475, and E480.

It belongs to the protein kinase superfamily. Ser/Thr protein kinase family. CDPK subfamily.

The enzyme catalyses L-seryl-[protein] + ATP = O-phospho-L-seryl-[protein] + ADP + H(+). It catalyses the reaction L-threonyl-[protein] + ATP = O-phospho-L-threonyl-[protein] + ADP + H(+). Its activity is regulated as follows. Activated by calcium. Autophosphorylation may play an important role in the regulation of the kinase activity. Functionally, may play a role in signal transduction pathways that involve calcium as a second messenger. This Oryza sativa subsp. japonica (Rice) protein is Calcium-dependent protein kinase 28.